A 132-amino-acid polypeptide reads, in one-letter code: MGGVRAVAALAFAGVVGLTFLVLGCALPRYGTWTPMFVITFYVLSPVPLLIARRFQEDMTGTNACIELALFITTGIVISAFALPIVLAHAGTIANSACFLVNTGSVIMFGTIIAYFYLHRDDDSGSWSQSLF.

Helical transmembrane passes span 7–27 (VAALAFAGVVGLTFLVLGCAL), 32–52 (TWTPMFVITFYVLSPVPLLIA), 68–88 (LALFITTGIVISAFALPIVLA), and 98–118 (CFLVNTGSVIMFGTIIAYFYL).

It belongs to the OB-RGRP/VPS55 family.

It localises to the endosome membrane. Its function is as follows. Involved in endosomal protein transport. The chain is Vacuolar protein sorting-associated protein 55 homolog from Caenorhabditis elegans.